A 755-amino-acid polypeptide reads, in one-letter code: Histone-lysine N-methyltransferase, H3 lysine-9 specific SUVH8 (755 aa).

Disordered regions lie at residues Tyr-62–Thr-98 and Tyr-111–Ile-243. Basic and acidic residues-rich tracts occupy residues Val-73–His-86 and Ile-122–His-135. Positions Lys-174 to Gly-186 form a DNA-binding region, a.T hook. A compositionally biased stretch (basic residues) spans Lys-174–Pro-193. Over residues Asp-197–Pro-207 the composition is skewed to polar residues. Residues Gly-212–Lys-231 are compositionally biased toward basic residues. Positions Gly-310 to Arg-448 constitute a YDG domain. One can recognise a Pre-SET domain in the interval Gln-528–Gly-578. The 143-residue stretch at Leu-581–Gly-723 folds into the SET domain. S-adenosyl-L-methionine contacts are provided by residues Cys-591–Trp-593, Asp-624, Tyr-626, Arg-676, and Asn-679–His-680. Positions 682, 743, 745, and 750 each coordinate Zn(2+). A Post-SET domain is found at Gly-739–Gly-755.

The protein belongs to the class V-like SAM-binding methyltransferase superfamily. Histone-lysine methyltransferase family. Suvar3-9 subfamily.

The protein resides in the nucleus. It localises to the chromosome. The protein localises to the centromere. The catalysed reaction is N(6)-methyl-L-lysyl(9)-[histone H3] + S-adenosyl-L-methionine = N(6),N(6)-dimethyl-L-lysyl(9)-[histone H3] + S-adenosyl-L-homocysteine + H(+). It catalyses the reaction L-lysyl(9)-[histone H3] + S-adenosyl-L-methionine = N(6)-methyl-L-lysyl(9)-[histone H3] + S-adenosyl-L-homocysteine + H(+). Its function is as follows. Histone methyltransferase. Methylates 'Lys-9' of histone H3. H3 'Lys-9' methylation represents a specific tag for epigenetic transcriptional repression. The chain is Histone-lysine N-methyltransferase, H3 lysine-9 specific SUVH8 (SUVH8) from Arabidopsis thaliana (Mouse-ear cress).